The sequence spans 217 residues: Putative N-acetylmuramoyl-L-alanine amidase (217 aa).

Residues 3–206 (IAIDAGHGGQ…ISKSISIALK (204 aa)) enclose the MurNAc-LAA domain.

This sequence belongs to the N-acetylmuramoyl-L-alanine amidase 3 family.

It localises to the secreted. It carries out the reaction Hydrolyzes the link between N-acetylmuramoyl residues and L-amino acid residues in certain cell-wall glycopeptides.. Cell-wall hydrolase involved in septum cleavage during cell division. The sequence is that of Putative N-acetylmuramoyl-L-alanine amidase (amiB) from Buchnera aphidicola subsp. Baizongia pistaciae (strain Bp).